The chain runs to 433 residues: Serine hydroxymethyltransferase (433 aa).

(6S)-5,6,7,8-tetrahydrofolate contacts are provided by residues Leu132 and 136–138 (GHL). The residue at position 241 (Lys241) is an N6-(pyridoxal phosphate)lysine.

The protein belongs to the SHMT family. In terms of assembly, homodimer. The cofactor is pyridoxal 5'-phosphate.

The protein localises to the cytoplasm. It carries out the reaction (6R)-5,10-methylene-5,6,7,8-tetrahydrofolate + glycine + H2O = (6S)-5,6,7,8-tetrahydrofolate + L-serine. It participates in one-carbon metabolism; tetrahydrofolate interconversion. The protein operates within amino-acid biosynthesis; glycine biosynthesis; glycine from L-serine: step 1/1. In terms of biological role, catalyzes the reversible interconversion of serine and glycine with tetrahydrofolate (THF) serving as the one-carbon carrier. This reaction serves as the major source of one-carbon groups required for the biosynthesis of purines, thymidylate, methionine, and other important biomolecules. Also exhibits THF-independent aldolase activity toward beta-hydroxyamino acids, producing glycine and aldehydes, via a retro-aldol mechanism. This chain is Serine hydroxymethyltransferase, found in Rhodopseudomonas palustris (strain HaA2).